Here is a 217-residue protein sequence, read N- to C-terminus: Probable nicotinate-nucleotide adenylyltransferase (217 aa).

Belongs to the NadD family.

The enzyme catalyses nicotinate beta-D-ribonucleotide + ATP + H(+) = deamido-NAD(+) + diphosphate. It functions in the pathway cofactor biosynthesis; NAD(+) biosynthesis; deamido-NAD(+) from nicotinate D-ribonucleotide: step 1/1. Functionally, catalyzes the reversible adenylation of nicotinate mononucleotide (NaMN) to nicotinic acid adenine dinucleotide (NaAD). The sequence is that of Probable nicotinate-nucleotide adenylyltransferase from Moorella thermoacetica (strain ATCC 39073 / JCM 9320).